The following is a 305-amino-acid chain: Carbamate kinase (305 aa).

This sequence belongs to the carbamate kinase family.

Its subcellular location is the cytoplasm. The catalysed reaction is hydrogencarbonate + NH4(+) + ATP = carbamoyl phosphate + ADP + H2O + H(+). It functions in the pathway metabolic intermediate metabolism; carbamoyl phosphate degradation; CO(2) and NH(3) from carbamoyl phosphate: step 1/1. In Thermoplasma volcanium (strain ATCC 51530 / DSM 4299 / JCM 9571 / NBRC 15438 / GSS1), this protein is Carbamate kinase (arcC).